The following is a 161-amino-acid chain: Large ribosomal subunit protein uL10 (161 aa).

It belongs to the universal ribosomal protein uL10 family. Part of the ribosomal stalk of the 50S ribosomal subunit. The N-terminus interacts with L11 and the large rRNA to form the base of the stalk. The C-terminus forms an elongated spine to which L12 dimers bind in a sequential fashion forming a multimeric L10(L12)X complex.

Functionally, forms part of the ribosomal stalk, playing a central role in the interaction of the ribosome with GTP-bound translation factors. The protein is Large ribosomal subunit protein uL10 of Sulfurovum sp. (strain NBC37-1).